Consider the following 158-residue polypeptide: 6,7-dimethyl-8-ribityllumazine synthase (158 aa).

Residues phenylalanine 23, 61-63 (SFE), and 85-87 (AVI) each bind 5-amino-6-(D-ribitylamino)uracil. Position 90–91 (90–91 (ET)) interacts with (2S)-2-hydroxy-3-oxobutyl phosphate. Histidine 93 functions as the Proton donor in the catalytic mechanism. Phenylalanine 118 provides a ligand contact to 5-amino-6-(D-ribitylamino)uracil. Arginine 132 lines the (2S)-2-hydroxy-3-oxobutyl phosphate pocket.

It belongs to the DMRL synthase family.

The enzyme catalyses (2S)-2-hydroxy-3-oxobutyl phosphate + 5-amino-6-(D-ribitylamino)uracil = 6,7-dimethyl-8-(1-D-ribityl)lumazine + phosphate + 2 H2O + H(+). It functions in the pathway cofactor biosynthesis; riboflavin biosynthesis; riboflavin from 2-hydroxy-3-oxobutyl phosphate and 5-amino-6-(D-ribitylamino)uracil: step 1/2. In terms of biological role, catalyzes the formation of 6,7-dimethyl-8-ribityllumazine by condensation of 5-amino-6-(D-ribitylamino)uracil with 3,4-dihydroxy-2-butanone 4-phosphate. This is the penultimate step in the biosynthesis of riboflavin. In Prochlorococcus marinus (strain AS9601), this protein is 6,7-dimethyl-8-ribityllumazine synthase.